The chain runs to 241 residues: Ribosomal RNA small subunit methyltransferase J (241 aa).

S-adenosyl-L-methionine-binding positions include Arg94–Asp95 and Asp163.

This sequence belongs to the methyltransferase superfamily. RsmJ family.

The protein localises to the cytoplasm. It catalyses the reaction guanosine(1516) in 16S rRNA + S-adenosyl-L-methionine = N(2)-methylguanosine(1516) in 16S rRNA + S-adenosyl-L-homocysteine + H(+). In terms of biological role, specifically methylates the guanosine in position 1516 of 16S rRNA. This is Ribosomal RNA small subunit methyltransferase J from Francisella tularensis subsp. tularensis (strain FSC 198).